Here is a 598-residue protein sequence, read N- to C-terminus: Transcription factor dpl-1 (598 aa).

Disordered regions lie at residues 1–73, 435–457, and 573–598; these read MNPT…PTGL, NRPYSTVPPDRRLSTGATSVNSG, and TEQPMTSAQAAALIQHPQPEEYDYFQ. The span at 13 to 22 shows a compositional bias: polar residues; sequence PAQSRPQVSL. Residues 55-64 show a composition bias toward gly residues; the sequence is GVGGSSGAGG.

This sequence belongs to the E2F/DP family. In terms of assembly, component of the DRM complex, at least composed of lin-9, lin-35, lin-37, lin-52, lin-53, lin-54- dpl-1 and efl-1. Interacts (via N-terminus) with efl-1. Interacts (via C-terminus) with lin-35 (via C-terminus).

Its subcellular location is the nucleus. Synthetic multivulva class B (synMuvB) protein. SynMuvB proteins are required to repress the induction of vulval development by Ras signaling and probably act by forming the multiprotein DRM complex that represses transcription. May also negatively regulate vulval development in association with other SynMuv class B proteins such as lin-15A. Can stimulate E2F-dependent transcription. Plays a role in negatively regulating the progression through the G1 phase of the cell cycle during postembryonic development, most likely by acting as a transcriptional repressor in association with the cell cycle regulatory factor efl-1 and the transcriptional repressor lin-35, but may also act as a positive regulator of cell cycle entry. Involved in the regulation of intestinal cell division during postembryonic development, most likely in complex with efl-1 and lin-35. Promotes germ cell programmed cell death, probably together with efl-1, by positively regulating the expression of the apoptosis proteins ced-3 and ced-4. In particular, positively regulates the expression of ced-4 in response to starvation. Its role in programmed cell death may be in conjunction with cell cycle regulatory factor efl-1 and the synthetic multivulva class B proteins lin-35, lin-37 and lin-52, and is independent of the ced-1, ced-8 and ced-9 pathways. The chain is Transcription factor dpl-1 from Caenorhabditis elegans.